We begin with the raw amino-acid sequence, 258 residues long: Putative cysteine-rich repeat secretory protein 16 (258 aa).

The signal sequence occupies residues 1–30 (MYYSSPTCFVLITIFAVVVTQLIFMRTVSS). Gnk2-homologous domains are found at residues 37 to 139 (YLNH…PFDT) and 144 to 247 (DKDN…LYPF).

This sequence belongs to the cysteine-rich repeat secretory protein family.

It is found in the secreted. The sequence is that of Putative cysteine-rich repeat secretory protein 16 (CRRSP16) from Arabidopsis thaliana (Mouse-ear cress).